A 48-amino-acid polypeptide reads, in one-letter code: AEDRKSLSGLTEQEAQEFGTLYTQGVAFVAVIAIVAHALVWAWRPWLQ.

Over 1-20 the chain is Cytoplasmic; it reads AEDRKSLSGLTEQEAQEFGT. The helical transmembrane segment at 21–43 threads the bilayer; it reads LYTQGVAFVAVIAIVAHALVWAW. Residue His37 coordinates a bacteriochlorophyll. Residues 44–48 are Periplasmic-facing; it reads RPWLQ.

The protein belongs to the antenna complex beta subunit family. The core complex is formed by different alpha and beta chains, binding bacteriochlorophyll molecules, and arranged most probably in tetrameric structures disposed around the reaction center. The non-pigmented gamma chains may constitute additional components.

It is found in the cell inner membrane. In terms of biological role, antenna complexes are light-harvesting systems, which transfer the excitation energy to the reaction centers. This is Light-harvesting polypeptide B-885 beta-2 chain from Rhodocyclus tenuis (Rhodospirillum tenue).